Reading from the N-terminus, the 195-residue chain is Shikimate kinase (195 aa).

Position 26 to 31 (Gly26 to Thr31) interacts with ATP. Ser30 contacts Mg(2+). Positions 48, 72, and 94 each coordinate substrate. Residue Arg132 participates in ATP binding. Arg151 serves as a coordination point for substrate.

The protein belongs to the shikimate kinase family. As to quaternary structure, monomer. Mg(2+) is required as a cofactor.

Its subcellular location is the cytoplasm. The catalysed reaction is shikimate + ATP = 3-phosphoshikimate + ADP + H(+). The protein operates within metabolic intermediate biosynthesis; chorismate biosynthesis; chorismate from D-erythrose 4-phosphate and phosphoenolpyruvate: step 5/7. Catalyzes the specific phosphorylation of the 3-hydroxyl group of shikimic acid using ATP as a cosubstrate. The polypeptide is Shikimate kinase (Synechococcus sp. (strain RCC307)).